We begin with the raw amino-acid sequence, 454 residues long: Allantoinase (454 aa).

Positions 60, 62, 147, 183, 239, and 312 each coordinate Zn(2+). An N6-carboxylysine modification is found at K147.

The protein belongs to the metallo-dependent hydrolases superfamily. Allantoinase family. Homotetramer. Zn(2+) is required as a cofactor. Carboxylation allows a single lysine to coordinate two zinc ions.

It catalyses the reaction (S)-allantoin + H2O = allantoate + H(+). It functions in the pathway nitrogen metabolism; (S)-allantoin degradation; allantoate from (S)-allantoin: step 1/1. Functionally, catalyzes the conversion of allantoin (5-ureidohydantoin) to allantoic acid by hydrolytic cleavage of the five-member hydantoin ring. The polypeptide is Allantoinase (Rubrobacter xylanophilus (strain DSM 9941 / JCM 11954 / NBRC 16129 / PRD-1)).